The chain runs to 109 residues: Putative double-stranded DNA mimic protein YciU (109 aa).

The protein belongs to the putative dsDNA mimic protein family.

Functionally, may act as a double-stranded DNA (dsDNA) mimic. Probably regulates the activity of a dsDNA-binding protein. The polypeptide is Putative double-stranded DNA mimic protein YciU (Shigella flexneri).